Reading from the N-terminus, the 318-residue chain is Inactive dihydropteroate synthase 2 (318 aa).

Residues 1-25 (MRSTPPASAGRSTPPALAGHSTPPA) form a disordered region. The Pterin-binding domain occupies 42 to 299 (ALIMAIVNRT…EVAATRRVLE (258 aa)).

Belongs to the DHPS family. In terms of assembly, homodimer.

In terms of biological role, has very low affinity for the DHPS substrate 6-hydroxymethyl-7,8-dihydropterin-pyrophosphate, but can bind the inhibitor dapsone. Seems to lack dihydropteroate synthase activity, and does probably not function in folate metabolism. This is Inactive dihydropteroate synthase 2 (folP2) from Mycobacterium bovis (strain ATCC BAA-935 / AF2122/97).